Consider the following 271-residue polypeptide: Formamidopyrimidine-DNA glycosylase (271 aa).

Residue proline 2 is the Schiff-base intermediate with DNA of the active site. Catalysis depends on glutamate 3, which acts as the Proton donor. Lysine 58 acts as the Proton donor; for beta-elimination activity in catalysis. Residues histidine 91, arginine 110, and arginine 152 each coordinate DNA. Residues 237 to 271 (LVYGREGQPCVHCGRPIRCETIGQRSSYFCTRCQR) form an FPG-type zinc finger. The active-site Proton donor; for delta-elimination activity is the arginine 261.

Belongs to the FPG family. Monomer. Zn(2+) serves as cofactor.

The catalysed reaction is Hydrolysis of DNA containing ring-opened 7-methylguanine residues, releasing 2,6-diamino-4-hydroxy-5-(N-methyl)formamidopyrimidine.. It catalyses the reaction 2'-deoxyribonucleotide-(2'-deoxyribose 5'-phosphate)-2'-deoxyribonucleotide-DNA = a 3'-end 2'-deoxyribonucleotide-(2,3-dehydro-2,3-deoxyribose 5'-phosphate)-DNA + a 5'-end 5'-phospho-2'-deoxyribonucleoside-DNA + H(+). In terms of biological role, involved in base excision repair of DNA damaged by oxidation or by mutagenic agents. Acts as a DNA glycosylase that recognizes and removes damaged bases. Has a preference for oxidized purines, such as 7,8-dihydro-8-oxoguanine (8-oxoG). Has AP (apurinic/apyrimidinic) lyase activity and introduces nicks in the DNA strand. Cleaves the DNA backbone by beta-delta elimination to generate a single-strand break at the site of the removed base with both 3'- and 5'-phosphates. The protein is Formamidopyrimidine-DNA glycosylase of Syntrophotalea carbinolica (strain DSM 2380 / NBRC 103641 / GraBd1) (Pelobacter carbinolicus).